Here is a 502-residue protein sequence, read N- to C-terminus: Glycerol kinase (502 aa).

Threonine 14 is a binding site for ADP. ATP contacts are provided by threonine 14, threonine 15, and serine 16. Threonine 14 serves as a coordination point for sn-glycerol 3-phosphate. Residue arginine 18 participates in ADP binding. The sn-glycerol 3-phosphate site is built by arginine 84, glutamate 85, tyrosine 136, and aspartate 246. Glycerol contacts are provided by arginine 84, glutamate 85, tyrosine 136, aspartate 246, and glutamine 247. Residues threonine 268 and glycine 311 each contribute to the ADP site. ATP contacts are provided by threonine 268, glycine 311, glutamine 315, and glycine 412. Residues glycine 412 and asparagine 416 each contribute to the ADP site.

It belongs to the FGGY kinase family. Homotetramer and homodimer (in equilibrium). Heterodimer with EIIA-Glc. Binds 1 zinc ion per glycerol kinase EIIA-Glc dimer. The zinc ion is important for dimerization.

The enzyme catalyses glycerol + ATP = sn-glycerol 3-phosphate + ADP + H(+). Its pathway is polyol metabolism; glycerol degradation via glycerol kinase pathway; sn-glycerol 3-phosphate from glycerol: step 1/1. Its activity is regulated as follows. Activity of this regulatory enzyme is affected by several metabolites. Allosterically and non-competitively inhibited by fructose 1,6-bisphosphate (FBP) and unphosphorylated phosphocarrier protein EIIA-Glc (III-Glc), an integral component of the bacterial phosphotransferase (PTS) system. In terms of biological role, key enzyme in the regulation of glycerol uptake and metabolism. Catalyzes the phosphorylation of glycerol to yield sn-glycerol 3-phosphate. This is Glycerol kinase from Enterobacter sp. (strain 638).